Reading from the N-terminus, the 209-residue chain is Cytidylate kinase (209 aa).

7 to 15 is a binding site for ATP; that stretch reads GPAASGKGT.

The protein belongs to the cytidylate kinase family. Type 1 subfamily.

It localises to the cytoplasm. The catalysed reaction is CMP + ATP = CDP + ADP. The enzyme catalyses dCMP + ATP = dCDP + ADP. The polypeptide is Cytidylate kinase (Afipia carboxidovorans (strain ATCC 49405 / DSM 1227 / KCTC 32145 / OM5) (Oligotropha carboxidovorans)).